The sequence spans 316 residues: L-lactate dehydrogenase 1 (316 aa).

Residues Val-17, Asp-38, Lys-43, and Tyr-69 each contribute to the NAD(+) site. Residues Arg-92 and 124-127 contribute to the substrate site; that span reads NPVD. Residues 122–124 and Thr-147 contribute to the NAD(+) site; that span reads VSN. 152 to 155 serves as a coordination point for substrate; sequence DTSR. His-179 (proton acceptor) is an active-site residue. Thr-234 is a substrate binding site.

The protein belongs to the LDH/MDH superfamily. LDH family. In terms of assembly, homotetramer.

It localises to the cytoplasm. It catalyses the reaction (S)-lactate + NAD(+) = pyruvate + NADH + H(+). It participates in fermentation; pyruvate fermentation to lactate; (S)-lactate from pyruvate: step 1/1. In terms of biological role, catalyzes the conversion of lactate to pyruvate. The chain is L-lactate dehydrogenase 1 from Bifidobacterium longum subsp. longum (strain ATCC 15707 / DSM 20219 / JCM 1217 / NCTC 11818 / E194b).